The following is a 159-amino-acid chain: Ribonuclease P protein component 2 (159 aa).

The protein belongs to the eukaryotic/archaeal RNase P protein component 2 family. As to quaternary structure, consists of a catalytic RNA component and at least 4-5 protein subunits.

Its subcellular location is the cytoplasm. It carries out the reaction Endonucleolytic cleavage of RNA, removing 5'-extranucleotides from tRNA precursor.. Functionally, part of ribonuclease P, a protein complex that generates mature tRNA molecules by cleaving their 5'-ends. This is Ribonuclease P protein component 2 from Halorubrum lacusprofundi (strain ATCC 49239 / DSM 5036 / JCM 8891 / ACAM 34).